A 526-amino-acid chain; its full sequence is ATP synthase subunit alpha (526 aa).

171-178 (GDRQTGKT) contributes to the ATP binding site.

The protein belongs to the ATPase alpha/beta chains family. F-type ATPases have 2 components, CF(1) - the catalytic core - and CF(0) - the membrane proton channel. CF(1) has five subunits: alpha(3), beta(3), gamma(1), delta(1), epsilon(1). CF(0) has four main subunits: a(1), b(1), b'(1) and c(9-12).

The protein localises to the cell inner membrane. It carries out the reaction ATP + H2O + 4 H(+)(in) = ADP + phosphate + 5 H(+)(out). Produces ATP from ADP in the presence of a proton gradient across the membrane. The alpha chain is a regulatory subunit. This is ATP synthase subunit alpha from Chlorobium phaeovibrioides (strain DSM 265 / 1930) (Prosthecochloris vibrioformis (strain DSM 265)).